Reading from the N-terminus, the 473-residue chain is Ribulose bisphosphate carboxylase large chain 3 (473 aa).

Residues asparagine 116 and threonine 166 each coordinate substrate. The active-site Proton acceptor is the lysine 168. Lysine 170 lines the substrate pocket. Lysine 194, aspartate 196, and glutamate 197 together coordinate Mg(2+). Position 194 is an N6-carboxylysine (lysine 194). The active-site Proton acceptor is the histidine 287. Residues arginine 288, histidine 320, and serine 372 each coordinate substrate.

It belongs to the RuBisCO large chain family. Type I subfamily. As to quaternary structure, heterohexadecamer of 8 large chains and 8 small chains. The cofactor is Mg(2+).

The catalysed reaction is 2 (2R)-3-phosphoglycerate + 2 H(+) = D-ribulose 1,5-bisphosphate + CO2 + H2O. It carries out the reaction D-ribulose 1,5-bisphosphate + O2 = 2-phosphoglycolate + (2R)-3-phosphoglycerate + 2 H(+). RuBisCO catalyzes two reactions: the carboxylation of D-ribulose 1,5-bisphosphate, the primary event in carbon dioxide fixation, as well as the oxidative fragmentation of the pentose substrate. Both reactions occur simultaneously and in competition at the same active site. This is Ribulose bisphosphate carboxylase large chain 3 from Nitrobacter hamburgensis (strain DSM 10229 / NCIMB 13809 / X14).